Reading from the N-terminus, the 558-residue chain is Hepatocyte nuclear factor 1-beta (558 aa).

Residues 1–31 (MVSKLTSLQQELLSALLSSGVTKEVLIQALE) form a dimerization region. An HNF-p1 domain is found at 1–32 (MVSKLTSLQQELLSALLSSGVTKEVLIQALEE). Phosphoserine is present on residues Ser-49, Ser-52, Ser-75, and Ser-80. Positions 66-85 (TNGHAKGRLSGDEGSEDGDD) are disordered. Positions 93–188 (KELQALNTEE…ILRQFNQTVQ (96 aa)) constitute a POU-specific atypical domain. The segment at residues 231–311 (MRRNRFKWGP…NRRKEEAFRQ (81 aa)) is a DNA-binding region (homeobox; HNF1-type). Residues 323–348 (THNLNPLLTHGSPHHQPSSSPPNKMS) are disordered.

The protein belongs to the HNF1 homeobox family. As to quaternary structure, binds DNA as a dimer. Can form homodimer or heterodimer with HNF1-alpha. Interacts (via HNF-p1 domain) with PCBD1; the interaction increases its transactivation activity.

It localises to the nucleus. Its function is as follows. Transcription factor that binds to the inverted palindrome 5'-GTTAATNATTAAC-3'. Binds to the FPC element in the cAMP regulatory unit of the PLAU gene. Transcriptional activity is increased by coactivator PCBD1. The sequence is that of Hepatocyte nuclear factor 1-beta (Hnf1b) from Mus musculus (Mouse).